Consider the following 186-residue polypeptide: Ribosome-recycling factor (186 aa).

Belongs to the RRF family.

It is found in the cytoplasm. Its function is as follows. Responsible for the release of ribosomes from messenger RNA at the termination of protein biosynthesis. May increase the efficiency of translation by recycling ribosomes from one round of translation to another. In Bordetella avium (strain 197N), this protein is Ribosome-recycling factor.